The chain runs to 847 residues: B-cell receptor CD22 (847 aa).

Positions Met1 to Ser19 are cleaved as a signal peptide. The Ig-like V-type domain maps to Asp20–Glu138. Over Asp20 to Arg687 the chain is Extracellular. Residues Asn67, Asn101, and Asn112 are each glycosylated (N-linked (GlcNAc...) asparagine). Residue Arg120 coordinates N-acetylneuraminate. Asn135, Asn164, and Asn231 each carry an N-linked (GlcNAc...) asparagine glycan. Ig-like C2-type domains follow at residues Pro143–Gln235, Pro242–Gln326, Pro331–Gln416, Pro419–Asn500, Pro505–Ser582, and Pro593–Thr676. Cys161 and Cys219 form a disulfide bridge. Intrachain disulfides connect Cys265-Cys309 and Cys353-Cys396. 5 N-linked (GlcNAc...) asparagine glycosylation sites follow: Asn363, Asn428, Asn445, Asn448, and Asn479. Disulfide bonds link Cys442-Cys484 and Cys529-Cys571. Residues Asn574 and Asn634 are each glycosylated (N-linked (GlcNAc...) asparagine). A disulfide bridge connects residues Cys616 and Cys659. The chain crosses the membrane as a helical span at residues Val688–Leu708. Topologically, residues Gln709–His847 are cytoplasmic. Phosphoserine is present on residues Ser725, Ser726, and Ser729. 2 short sequence motifs (ITIM motif) span residues Ile760–Leu765 and Val794–Leu799. The residue at position 762 (Tyr762) is a Phosphotyrosine. 3 positions are modified to phosphotyrosine: Tyr807, Tyr822, and Tyr842. 2 consecutive short sequence motifs (ITIM motif) follow at residues Ile820 to Leu825 and Val840 to Leu845.

It belongs to the immunoglobulin superfamily. SIGLEC (sialic acid binding Ig-like lectin) family. In terms of assembly, predominantly monomer of isoform CD22-beta. Also found as heterodimer of isoform CD22-beta and a shorter isoform. Interacts with PTPN6/SHP-1, LYN, SYK, PIK3R1/PIK3R2 and PLCG1 upon phosphorylation. Interacts with GRB2, INPP5D and SHC1 upon phosphorylation. May form a complex with INPP5D/SHIP, GRB2 and SHC1. In terms of processing, phosphorylation of Tyr-762, Tyr-807 and Tyr-822 are involved in binding to SYK, GRB2 and SYK, respectively. Phosphorylation of Tyr-842 is involved in binding to SYK, PLCG2 and PIK3R1/PIK3R2. Post-translationally, phosphorylated on tyrosine residues by LYN.

The protein localises to the cell membrane. Functionally, most highly expressed siglec (sialic acid-binding immunoglobulin-like lectin) on B-cells that plays a role in various aspects of B-cell biology including differentiation, antigen presentation, and trafficking to bone marrow. Binds to alpha 2,6-linked sialic acid residues of surface molecules such as CD22 itself, CD45 and IgM in a cis configuration. Can also bind to ligands on other cells as an adhesion molecule in a trans configuration. Acts as an inhibitory coreceptor on the surface of B-cells and inhibits B-cell receptor induced signaling, characterized by inhibition of the calcium mobilization and cellular activation. Mechanistically, the immunoreceptor tyrosine-based inhibitory motif domain is phosphorylated by the Src kinase LYN, which in turn leads to the recruitment of the protein tyrosine phosphatase 1/PTPN6, leading to the negative regulation of BCR signaling. If this negative signaling from is of sufficient strength, apoptosis of the B-cell can be induced. The sequence is that of B-cell receptor CD22 from Pan paniscus (Pygmy chimpanzee).